The primary structure comprises 204 residues: High frequency lysogenization protein HflD homolog (204 aa).

Belongs to the HflD family.

The protein localises to the cytoplasm. The protein resides in the cell inner membrane. This chain is High frequency lysogenization protein HflD homolog, found in Shewanella woodyi (strain ATCC 51908 / MS32).